A 434-amino-acid chain; its full sequence is T-box transcription factor T homolog (434 aa).

A DNA-binding region (T-box) is located at residues 50 to 220 (LWKKFHKLTN…YNPFAKAFLD (171 aa)). Composition is skewed to polar residues over residues 355-364 (SGFSHVSSPQ) and 376-385 (HPTSSHQHNL). The disordered stretch occupies residues 355–385 (SGFSHVSSPQSPLPTGLFRNPHPTSSHQHNL).

In terms of tissue distribution, in the developing embryo, expressed in the mesenchyme founder cells, vegetal plate of the mesenchyme blastula, extending tip of the invaginating archenteron and, later, in the secondary mesenchyme cells.

It is found in the nucleus. Its function is as follows. Involved in the transcriptional regulation of genes required for mesoderm differentiation. The chain is T-box transcription factor T homolog from Hemicentrotus pulcherrimus (Sea urchin).